The sequence spans 214 residues: MLAFVKCFSLKRAKHPRGYEDPHVLASETPFTVNEIEALHDLFKKLSTSIINDGLIHKEEFLLALFRNGSMQNLFADRVFYMFDRKRNGVIEFGEFVRSLSIFHPYTPEHEKSAFMFKLFDLHGTGFIEPHELKKMVGALLGETDLELSEESIEAIVEQTMLEVDTNKDGKIDEEEWKELVAKNPSILKNMTLPYLKEVTLAFPSFVLDSEVED.

EF-hand domains lie at Glu35–Ser70, Met71–Tyr106, Pro108–Glu143, and Ser152–Ile187. The Ca(2+) site is built by Asp165, Asn167, Asp169, Lys171, and Glu176. Ser205 bears the Phosphoserine mark.

It belongs to the calcineurin regulatory subunit family. Interacts with CIPK23. Interacts with CIPK14 at the cell membrane exclusively.

The protein resides in the cytoplasm. The protein localises to the nucleus. It localises to the cell membrane. Functionally, acts as a calcium sensor. CBL proteins interact with CIPK serine-threonine protein kinases. Binding of a CBL protein to the regulatory NAF domain of a CIPK protein lead to the activation of the kinase in a calcium-dependent manner. The chain is Calcineurin B-like protein 8 (CBL8) from Arabidopsis thaliana (Mouse-ear cress).